The following is a 361-amino-acid chain: P2Y purinoceptor 4 (361 aa).

Residues 1–20 (MTSAESLLFTSLGPSPSSGD) are disordered. The Extracellular segment spans residues 1–30 (MTSAESLLFTSLGPSPSSGDGDCRFNEEFK). The helical transmembrane segment at 31–58 (FILLPMSYAVVFVLGLALNAPTLWLFLF) threads the bilayer. Over 59–68 (RLRPWDATAT) the chain is Cytoplasmic. The helical transmembrane segment at 69–91 (YMFHLALSDTLYVLSLPTLVYYY) threads the bilayer. The Extracellular portion of the chain corresponds to 92–108 (AARNHWPFGTGLCKFVR). Residues C104 and C181 are joined by a disulfide bond. The chain crosses the membrane as a helical span at residues 109–127 (FLFYWNLYCSVLFLTCISV). Over 128 to 149 (HRYLGICHPLRAIRWGRPRFAS) the chain is Cytoplasmic. A helical membrane pass occupies residues 150 to 170 (LLCLGVWLVVAGCLVPNLFFV). Over 171–192 (TTNANGTTILCHDTTLPEEFDH) the chain is Extracellular. Residue N175 is glycosylated (N-linked (GlcNAc...) asparagine). A helical membrane pass occupies residues 193–218 (YVYFSSAVMVLLFGLPFLITLVCYGL). The Cytoplasmic segment spans residues 219–242 (MARRLYRPLPGAGQSSSRLRSLRT). A helical transmembrane segment spans residues 243-265 (IAVVLTVFAVCFVPFHITRTIYY). Residues 266–283 (QARLLQADCHVLNIVNVV) lie on the Extracellular side of the membrane. The chain crosses the membrane as a helical span at residues 284-305 (YKVTRPLASANSCLDPVLYLFT). Residues 306–361 (GDKYRNQLQQLCRGSKPKPRTAASSLALVTLHEESISRWADTHQDSTFSAYEGDRL) are Cytoplasmic-facing.

It belongs to the G-protein coupled receptor 1 family. Post-translationally, phosphorylation of Ser-329 and Ser-330 is a key step in agonist-dependent desensitization and loss of surface P2RY4. This phosphorylation does not involve PKC, nor other calcium-activated kinases. In terms of tissue distribution, widely expressed at low levels. In brain, higher expression in the pineal gland and ventricular system.

Its subcellular location is the cell membrane. Receptor for ATP and UTP coupled to G-proteins that activate a phosphatidylinositol-calcium second messenger system. Not activated by ADP or UDP. The sequence is that of P2Y purinoceptor 4 (P2ry4) from Rattus norvegicus (Rat).